The chain runs to 229 residues: Urease accessory protein UreF (229 aa).

It belongs to the UreF family. As to quaternary structure, ureD, UreF and UreG form a complex that acts as a GTP-hydrolysis-dependent molecular chaperone, activating the urease apoprotein by helping to assemble the nickel containing metallocenter of UreC. The UreE protein probably delivers the nickel.

Its subcellular location is the cytoplasm. Required for maturation of urease via the functional incorporation of the urease nickel metallocenter. In Staphylococcus aureus (strain bovine RF122 / ET3-1), this protein is Urease accessory protein UreF.